Reading from the N-terminus, the 169-residue chain is Probable prefoldin subunit 3 (169 aa).

The protein belongs to the prefoldin subunit alpha family. Heterohexamer of two PFD-alpha type and four PFD-beta type subunits.

Functionally, binds specifically to cytosolic chaperonin (c-CPN) and transfers target proteins to it. Binds to nascent polypeptide chain and promotes folding in an environment in which there are many competing pathways for nonnative proteins. The chain is Probable prefoldin subunit 3 from Schizosaccharomyces pombe (strain 972 / ATCC 24843) (Fission yeast).